Reading from the N-terminus, the 224-residue chain is Mammalian ependymin-related protein 1 (224 aa).

A signal peptide spans 1–37 (MLTRAPRRLVQGPRETWLLGGLWVWILCGLGMAGSPG). 3 cysteine pairs are disulfide-bonded: Cys-42-Cys-172, Cys-88-Cys-222, and Cys-113-Cys-210. 2 N-linked (GlcNAc...) asparagine glycosylation sites follow: Asn-130 and Asn-182.

Belongs to the ependymin family. Homodimer. In terms of processing, N-glycosylated; the glycan contains mannose-6-phosphate moieties. Detected in brain (at protein level).

The protein resides in the lysosome lumen. It is found in the secreted. Its function is as follows. Binds anionic lipids and gangliosides at acidic pH. The polypeptide is Mammalian ependymin-related protein 1 (Epdr1) (Rattus norvegicus (Rat)).